A 647-amino-acid polypeptide reads, in one-letter code: Threonine--tRNA ligase (647 aa).

Residues 1 to 61 (MIKITFPDGA…TEDGAIEIVT (61 aa)) form the TGS domain. A catalytic region spans residues 242–540 (DHRKLGKELD…LIENYKGAFP (299 aa)). The Zn(2+) site is built by C336, H387, and H517.

It belongs to the class-II aminoacyl-tRNA synthetase family. Homodimer. The cofactor is Zn(2+).

The protein resides in the cytoplasm. It carries out the reaction tRNA(Thr) + L-threonine + ATP = L-threonyl-tRNA(Thr) + AMP + diphosphate + H(+). In terms of biological role, catalyzes the attachment of threonine to tRNA(Thr) in a two-step reaction: L-threonine is first activated by ATP to form Thr-AMP and then transferred to the acceptor end of tRNA(Thr). Also edits incorrectly charged L-seryl-tRNA(Thr). The protein is Threonine--tRNA ligase of Streptococcus sanguinis (strain SK36).